Consider the following 255-residue polypeptide: EEF1A lysine methyltransferase 4 (255 aa).

S-adenosyl-L-methionine is bound by residues Trp-26 and Tyr-30. Tyr-39 carries the post-translational modification Phosphotyrosine. S-adenosyl-L-methionine is bound by residues Trp-41, Gly-66, 88-89, 113-114, and Lys-130; these read DY and DV. The Required for methyltransferase activity signature appears at 129–134; it reads EKGTLD.

This sequence belongs to the methyltransferase superfamily.

It carries out the reaction L-lysyl-[protein] + S-adenosyl-L-methionine = N(6)-methyl-L-lysyl-[protein] + S-adenosyl-L-homocysteine + H(+). The enzyme catalyses N(6)-methyl-L-lysyl-[protein] + S-adenosyl-L-methionine = N(6),N(6)-dimethyl-L-lysyl-[protein] + S-adenosyl-L-homocysteine + H(+). It catalyses the reaction N(6),N(6)-dimethyl-L-lysyl-[protein] + S-adenosyl-L-methionine = N(6),N(6),N(6)-trimethyl-L-lysyl-[protein] + S-adenosyl-L-homocysteine + H(+). Protein-lysine methyltransferase that efficiently catalyzes three successive methylations on 'Lys-36' in eukaryotic translation elongation factor 1 alpha (EEF1A1 or EEF1A2). The polypeptide is EEF1A lysine methyltransferase 4 (Homo sapiens (Human)).